A 774-amino-acid chain; its full sequence is FT-interacting protein 7 (774 aa).

The segment covering 1 to 17 (MMQRPFRPEEYSLKETS) has biased composition (basic and acidic residues). Residues 1-25 (MMQRPFRPEEYSLKETSPHLGGGAA) form a disordered region. C2 domains lie at 23-143 (GAAG…PQWY), 182-305 (IPGD…SQWY), and 346-472 (YSSD…THAY). Ca(2+) is bound by residues aspartate 56, aspartate 62, aspartate 109, aspartate 111, and aspartate 116. 3 helical membrane-spanning segments follow: residues 575–595 (IMGV…ICHW), 606–626 (ILFV…FLYL), and 714–734 (ATAL…VTPF).

The protein belongs to the MCTP family. Interacts with OSH1. The cofactor is Ca(2+). In terms of tissue distribution, expressed in roots, stems, lemma, palea, pistils and ovules. Expressed at low levels in leaves.

It localises to the cell membrane. In terms of biological role, promotes nuclear translocation of the transcription factor OSH1, which directly suppresses the auxin biosynthetic gene YUCCA4 during the late development of anthers. Reduction of auxin levels at late stage of anther development, after meiosis of microspore mother cells, is necessary for normal anther dehiscence and seed setting. Required for jasmonate (JA) biosynthetic genes expression and JA production in anthers. This Oryza sativa subsp. japonica (Rice) protein is FT-interacting protein 7.